The primary structure comprises 60 residues: Potassium channel toxin alpha-KTx 15.9 (60 aa).

Residues 1-22 form the signal peptide; sequence MKIFLPVLVMLILCSMCLLTEG. Disulfide bonds link cysteine 30–cysteine 51, cysteine 36–cysteine 56, and cysteine 40–cysteine 58.

Belongs to the short scorpion toxin superfamily. Potassium channel inhibitor family. Alpha-KTx 15 subfamily. As to expression, expressed by the venom gland.

The protein localises to the secreted. Its function is as follows. Blocker of A-type voltage-gated potassium channels of cerebellar granular cells. May also inhibit Kv4/KCND when coexpressed with DPP6 or DPP10. The occlusion of the outer entry of the K(+) conducting pore is partially reversible and affects both open and closed channels. It shares the same target in rat brain than BmTX3 (AC Q8I0L5) and AmmTX3 (AC P60208). Has been shown to weakly inhibit TRPV1 channels. The protein is Potassium channel toxin alpha-KTx 15.9 of Lychas mucronatus (Chinese swimming scorpion).